An 826-amino-acid polypeptide reads, in one-letter code: Periplasmic nitrate reductase (826 aa).

Residues 1-32 constitute a signal peptide (tat-type signal); that stretch reads MELNRRDFMKANAAIAAAAAAGITIPVKNVQA. The 4Fe-4S Mo/W bis-MGD-type domain occupies 37–93; sequence IRWDKAPCRYCGTGCSVLVGTKDGRVVATQGDPDAEVNRGLNCIKGYFLSKIMYGAD. Cys-44, Cys-47, Cys-51, and Cys-79 together coordinate [4Fe-4S] cluster. Mo-bis(molybdopterin guanine dinucleotide)-binding positions include Lys-81, Gln-148, Asn-173, Cys-177, 210 to 217, 241 to 245, 260 to 262, Met-370, Gln-374, Asn-480, 506 to 507, Lys-529, Asp-556, and 716 to 725; these read WGSNMAEM, STYEH, QSD, SD, and TGRVLEHWHT. A substrate-binding site is contributed by Phe-792. Mo-bis(molybdopterin guanine dinucleotide)-binding residues include Asn-800 and Lys-817.

Belongs to the prokaryotic molybdopterin-containing oxidoreductase family. NasA/NapA/NarB subfamily. As to quaternary structure, component of the periplasmic nitrate reductase NapAB complex composed of NapA and NapB. Requires [4Fe-4S] cluster as cofactor. Mo-bis(molybdopterin guanine dinucleotide) serves as cofactor. Post-translationally, predicted to be exported by the Tat system. The position of the signal peptide cleavage has not been experimentally proven.

It is found in the periplasm. It carries out the reaction 2 Fe(II)-[cytochrome] + nitrate + 2 H(+) = 2 Fe(III)-[cytochrome] + nitrite + H2O. Functionally, catalytic subunit of the periplasmic nitrate reductase complex NapAB. Receives electrons from NapB and catalyzes the reduction of nitrate to nitrite. This chain is Periplasmic nitrate reductase, found in Actinobacillus succinogenes (strain ATCC 55618 / DSM 22257 / CCUG 43843 / 130Z).